The sequence spans 1081 residues: Disheveled-associated activator of morphogenesis 1-A (1081 aa).

The GBD/FH3 domain occupies 45–418; the sequence is LPVPPVEELD…QIVIQNEKGQ (374 aa). 2 disordered regions span residues 455-476 and 519-615; these read KEHN…AKTQ and RTVC…PLKS. Positions 526–536 are enriched in pro residues; that stretch reads PGGPPPPPGAP. Residues 538–547 are compositionally biased toward low complexity; it reads GPMSMPSGNF. The segment covering 548–585 has biased composition (pro residues); it reads MPPPPPPPPPFPGGMAPPPPPPPPPPPPPGGPPPPPGL. Low complexity predominate over residues 586-600; sequence PLLGAAPPGAPLGLS. One can recognise an FH2 domain in the interval 603–1012; it reads KKNIPQPKNP…EERRIRMEAQ (410 aa). Residues 696-705 are actin-binding; that stretch reads AQNCNILLSR. Residues 1013–1029 show a composition bias toward basic and acidic residues; it reads LKEQRERERKARKAKEN. Disordered stretches follow at residues 1013–1038 and 1060–1081; these read LKEQ…EFDD and RKRI…KLNY. In terms of domain architecture, DAD spans 1030–1061; it reads GEEEGEFDDLVSALRSGEVFDKDLSKLKRNRK. Residues 1070-1081 are compositionally biased toward basic and acidic residues; the sequence is SSRERPVTKLNY.

The protein resides in the cytoplasm. Its subcellular location is the cytoskeleton. It localises to the cilium basal body. Binds to disheveled (dsh) and Rho, and mediates Wnt-induced dsh-Rho complex formation during gastrulation. May play a role as a scaffolding protein to recruit Rho-GDP and Rho-GEF, thereby enhancing Rho-GTP formation. Can direct nucleation and elongation of new actin filaments. Involved in building functional cilia. Involved in building functional cilia. Involved in the organization of the subapical actin network in multiciliated epithelial cells. This is Disheveled-associated activator of morphogenesis 1-A (daam1-a) from Xenopus laevis (African clawed frog).